Here is a 447-residue protein sequence, read N- to C-terminus: Signal recognition particle 54 kDa protein (447 aa).

GTP is bound by residues 103–110, 185–189, and 245–248; these read GVQGSGKT, DTAGR, and TKMD.

Belongs to the GTP-binding SRP family. SRP54 subfamily. Part of the signal recognition particle protein translocation system, which is composed of SRP and FtsY. Archaeal SRP consists of a 7S RNA molecule of 300 nucleotides and two protein subunits: SRP54 and SRP19.

The protein resides in the cytoplasm. It carries out the reaction GTP + H2O = GDP + phosphate + H(+). Involved in targeting and insertion of nascent membrane proteins into the cytoplasmic membrane. Binds to the hydrophobic signal sequence of the ribosome-nascent chain (RNC) as it emerges from the ribosomes. The SRP-RNC complex is then targeted to the cytoplasmic membrane where it interacts with the SRP receptor FtsY. The polypeptide is Signal recognition particle 54 kDa protein (Saccharolobus islandicus (strain Y.N.15.51 / Yellowstone #2) (Sulfolobus islandicus)).